The chain runs to 384 residues: Cell division protein FtsZ (384 aa).

GTP-binding positions include 20–24 (GGGSN), 107–109 (GTG), E138, R142, and N186.

It belongs to the FtsZ family. Homodimer. Polymerizes to form a dynamic ring structure in a strictly GTP-dependent manner. Interacts directly with several other division proteins.

Its subcellular location is the cytoplasm. In terms of biological role, essential cell division protein that forms a contractile ring structure (Z ring) at the future cell division site. The regulation of the ring assembly controls the timing and the location of cell division. One of the functions of the FtsZ ring is to recruit other cell division proteins to the septum to produce a new cell wall between the dividing cells. Binds GTP and shows GTPase activity. The polypeptide is Cell division protein FtsZ (Buchnera aphidicola subsp. Acyrthosiphon pisum (strain APS) (Acyrthosiphon pisum symbiotic bacterium)).